Here is a 336-residue protein sequence, read N- to C-terminus: Coproporphyrin III ferrochelatase (336 aa).

Residues S52 and Y116 each coordinate Fe-coproporphyrin III. Fe(2+)-binding residues include H172 and E255.

The protein belongs to the ferrochelatase family.

It localises to the cytoplasm. It catalyses the reaction Fe-coproporphyrin III + 2 H(+) = coproporphyrin III + Fe(2+). It functions in the pathway porphyrin-containing compound metabolism; protoheme biosynthesis. Involved in coproporphyrin-dependent heme b biosynthesis. Catalyzes the insertion of ferrous iron into coproporphyrin III to form Fe-coproporphyrin III. This is Coproporphyrin III ferrochelatase from Mycolicibacterium paratuberculosis (strain ATCC BAA-968 / K-10) (Mycobacterium paratuberculosis).